Here is a 1132-residue protein sequence, read N- to C-terminus: Serine/threonine-protein kinase spk-1 (1132 aa).

A helical transmembrane segment spans residues 75-95 (GGSLILTDIFPTVLFMFVVLF). Disordered stretches follow at residues 240-388 (NEDQ…DSDD) and 419-481 (NKKA…KRGG). Acidic residues-rich tracts occupy residues 281–290 (SEDEDVESQE) and 311–336 (DEPI…LGDE). Low complexity predominate over residues 362–372 (DSSVSSSTSST). A compositionally biased stretch (acidic residues) spans 373-388 (PDDDEDDSATSYDSDD). The span at 421 to 433 (KAEVNANEERMDD) shows a compositional bias: basic and acidic residues. Positions 434-443 (VSVSPGRSDS) are enriched in low complexity. The region spanning 495–1044 (YHVIRKLGWG…ANDALKHPFL (550 aa)) is the Protein kinase domain. ATP-binding positions include 501-509 (LGWGHFSTV) and K524. D628 acts as the Proton acceptor in catalysis. The interval 1066–1121 (QVPEALDGNQEVYRDENDSNSASERSANRSAGSDDEEEFHMDRPGPSGVINEPADV) is disordered. The span at 1084-1096 (SNSASERSANRSA) shows a compositional bias: low complexity.

This sequence belongs to the protein kinase superfamily. Ser/Thr protein kinase family.

The protein resides in the membrane. The catalysed reaction is L-seryl-[protein] + ATP = O-phospho-L-seryl-[protein] + ADP + H(+). The enzyme catalyses L-threonyl-[protein] + ATP = O-phospho-L-threonyl-[protein] + ADP + H(+). Its function is as follows. Required for embryogenesis and germline development in both adult hermaphrodites and males. SR-protein kinase (SRPK) that binds directly to and phosphorylates RS domains. This chain is Serine/threonine-protein kinase spk-1 (spk-1), found in Caenorhabditis briggsae.